Here is a 226-residue protein sequence, read N- to C-terminus: uncharacterized protein (226 aa).

A helical membrane pass occupies residues 5-25; it reads IKTVSFAAAAILVVIICTFLI.

Its subcellular location is the cell membrane. This is an uncharacterized protein from Bacillus subtilis (strain 168).